The sequence spans 625 residues: Probable potassium transport system protein Kup (625 aa).

Transmembrane regions (helical) follow at residues 13-33, 53-73, 103-123, 141-161, 172-192, 206-226, 250-270, 282-302, 340-360, 369-389, 400-420, and 422-442; these read TALAALGVVFGDIGTSPLYAL, ILSIIFWCLMLIISIKYVAIV, IYMIAIGFIGASLFFGDGIIT, VFDPFIMPIAIAIIVTLFLVQ, FGPITLVWFLSLGILGIHSVI, AIQFIYHHPIMTFFVMGAVVL, WFFVVLPCLVLNYAGQGALLL, LLVPQWALYPMIIMATMATVI, IYVPFLNWLLLIAIIILILIF, AYGLAVTLTMLCDTILVAVFI, VLILIIPFFILESVLVGATSL, and ILSGGWVPLLIGAIAVTILMT.

It belongs to the HAK/KUP transporter (TC 2.A.72) family.

The protein localises to the cell inner membrane. The enzyme catalyses K(+)(in) + H(+)(in) = K(+)(out) + H(+)(out). Transport of potassium into the cell. Likely operates as a K(+):H(+) symporter. The sequence is that of Probable potassium transport system protein Kup from Acinetobacter baumannii (strain SDF).